We begin with the raw amino-acid sequence, 386 residues long: S-adenosylmethionine synthase (386 aa).

Residue histidine 16 participates in ATP binding. Aspartate 18 contributes to the Mg(2+) binding site. Glutamate 44 is a binding site for K(+). Glutamate 57 and glutamine 100 together coordinate L-methionine. The segment at 100–110 (QSSDIAQGVDR) is flexible loop. ATP contacts are provided by residues 165–167 (DAK), aspartate 240, 246–247 (RK), alanine 263, and lysine 267. Aspartate 240 is an L-methionine binding site. An L-methionine-binding site is contributed by lysine 271.

The protein belongs to the AdoMet synthase family. In terms of assembly, homotetramer; dimer of dimers. Requires Mg(2+) as cofactor. The cofactor is K(+).

The protein resides in the cytoplasm. It catalyses the reaction L-methionine + ATP + H2O = S-adenosyl-L-methionine + phosphate + diphosphate. The protein operates within amino-acid biosynthesis; S-adenosyl-L-methionine biosynthesis; S-adenosyl-L-methionine from L-methionine: step 1/1. In terms of biological role, catalyzes the formation of S-adenosylmethionine (AdoMet) from methionine and ATP. The overall synthetic reaction is composed of two sequential steps, AdoMet formation and the subsequent tripolyphosphate hydrolysis which occurs prior to release of AdoMet from the enzyme. The polypeptide is S-adenosylmethionine synthase (Francisella philomiragia subsp. philomiragia (strain ATCC 25017 / CCUG 19701 / FSC 153 / O#319-036)).